The chain runs to 154 residues: Ribosomal RNA large subunit methyltransferase H (154 aa).

S-adenosyl-L-methionine contacts are provided by residues Gly-103 and 122–127 (FSKLTF).

Belongs to the RNA methyltransferase RlmH family. Homodimer.

The protein resides in the cytoplasm. It catalyses the reaction pseudouridine(1915) in 23S rRNA + S-adenosyl-L-methionine = N(3)-methylpseudouridine(1915) in 23S rRNA + S-adenosyl-L-homocysteine + H(+). Its function is as follows. Specifically methylates the pseudouridine at position 1915 (m3Psi1915) in 23S rRNA. The protein is Ribosomal RNA large subunit methyltransferase H of Caldicellulosiruptor bescii (strain ATCC BAA-1888 / DSM 6725 / KCTC 15123 / Z-1320) (Anaerocellum thermophilum).